The sequence spans 138 residues: Basic phospholipase A2 homolog Ts-K49b (138 aa).

A signal peptide spans 1–16; the sequence is MRTLWIMAVLLVGVEG. Disulfide bonds link C42-C131, C44-C60, C65-C138, C66-C104, C73-C97, and C91-C102. The segment at 121–133 is important for membrane-damaging activities in eukaryotes and bacteria; heparin-binding; the sequence is KKKKINLKLFCKK.

In terms of tissue distribution, expressed by the venom gland.

The protein localises to the secreted. Snake venom phospholipase A2 homolog that lacks catalytic activity. It shows myotoxic and weak anticoagulant activities. A model of myotoxic mechanism has been proposed: an apo Lys49-PLA2 is activated by the entrance of a hydrophobic molecule (e.g. fatty acid) at the hydrophobic channel of the protein leading to a reorientation of a monomer. This reorientation causes a transition between 'inactive' to 'active' states, causing alignment of C-terminal and membrane-docking sites (MDoS) side-by-side and putting the membrane-disruption sites (MDiS) in the same plane, exposed to solvent and in a symmetric position for both monomers. The MDoS region stabilizes the toxin on membrane by the interaction of charged residues with phospholipid head groups. Subsequently, the MDiS region destabilizes the membrane with penetration of hydrophobic residues. This insertion causes a disorganization of the membrane, allowing an uncontrolled influx of ions (i.e. calcium and sodium), and eventually triggering irreversible intracellular alterations and cell death. The chain is Basic phospholipase A2 homolog Ts-K49b from Trimeresurus stejnegeri (Chinese green tree viper).